The chain runs to 1683 residues: Genome polyprotein (1683 aa).

The Extracellular portion of the chain corresponds to 1–445 (MRCIGISNRD…LHQVFGAIYG (445 aa)). Intrachain disulfides connect C3/C30, C60/C121, C74/C105, and C92/C116. The N-linked (GlcNAc...) asparagine; by host glycan is linked to N67. The fusion peptide stretch occupies residues 98-111 (DRGWGNGCGLFGKG). The N-linked (GlcNAc...) asparagine; by host glycan is linked to N153. 2 disulfide bridges follow: C185/C285 and C302/C333. The chain crosses the membrane as a helical span at residues 446–466 (AAFSGVSWTMKILIGVIITWI). The Cytoplasmic segment spans residues 467-472 (GMNSRS). The chain crosses the membrane as a helical span at residues 473–493 (TSLSVSLVLVGIVTLYLGVMV). At 494-915 (QADSGCVVSW…MVGATMTDDI (422 aa)) the chain is on the extracellular side. 6 cysteine pairs are disulfide-bonded: C499/C510, C550/C638, C674/C718, C775/C824, C786/C808, and C807/C811. N-linked (GlcNAc...) asparagine; by host glycosylation is present at N702. Residues 916–940 (GMGVTYLALLAAFRVRPTFAAGLLL) traverse the membrane as a helical segment. At 941-946 (RKLTSK) the chain is on the cytoplasmic side. A helical transmembrane segment spans residues 947–965 (ELMMTTIGIVLLSQSSIPE). Residues 966 to 989 (TILELTDALALGMMVLKMVRNMEK) lie on the Lumenal side of the membrane. Residues 990–1010 (YQLAVTIMAILCVPNAVILQN) form a helical membrane-spanning segment. A1011 is a topological domain (cytoplasmic). The chain crosses the membrane as a helical span at residues 1012–1030 (WKVSCTILAVVSVSPLLLT). Over 1031 to 1037 (SSQQKAD) the chain is Lumenal. Residues 1038-1058 (WIPLALTIKGLNPTAIFLTTL) traverse the membrane as a helical segment. Over 1059 to 1683 (SRTSKKRAGV…EFKEFAAGRK (625 aa)) the chain is Cytoplasmic. The 178-residue stretch at 1066–1243 (AGVLWDVPSP…EKSIEDNPEI (178 aa)) folds into the Peptidase S7 domain. Active-site charge relay system; for serine protease NS3 activity residues include H1116, D1140, and S1200. The 157-residue stretch at 1245 to 1401 (DDIFRKRRLT…QSNAPIMDEE (157 aa)) folds into the Helicase ATP-binding domain. An important for RNA-binding region spans residues 1249 to 1252 (RKRR). ATP is bound at residue 1258-1265 (LHPGAGKT). Residues 1349 to 1352 (DEAH) carry the DEAH box motif. Residues 1411–1582 (SGHEWVTDFK…IFEPEREKVD (172 aa)) enclose the Helicase C-terminal domain.

In terms of assembly, capsid protein C: Homodimer. Interacts (via N-terminus) with host EXOC1 (via C-terminus); this interaction results in EXOC1 degradation through the proteasome degradation pathway. Protein prM: Forms heterodimers with envelope protein E in the endoplasmic reticulum and Golgi. As to quaternary structure, homodimer; in the endoplasmic reticulum and Golgi. Interacts with protein prM. Interacts with non-structural protein 1. Homodimer; Homohexamer when secreted. Interacts with envelope protein E. In terms of assembly, interacts (via N-terminus) with serine protease NS3. Non-structural protein 2B: Forms a heterodimer with serine protease NS3. May form homooligomers. As to quaternary structure, forms a heterodimer with NS2B. Interacts with NS4B. Interacts with unphosphorylated RNA-directed RNA polymerase NS5; this interaction stimulates RNA-directed RNA polymerase NS5 guanylyltransferase activity. Interacts with host SHFL. In terms of processing, specific enzymatic cleavages in vivo yield mature proteins. Cleavages in the lumen of endoplasmic reticulum are performed by host signal peptidase, wereas cleavages in the cytoplasmic side are performed by the Serine protease NS3. Signal cleavage at the 2K-4B site requires a prior NS3 protease-mediated cleavage at the 4A-2K site. N-glycosylated. The excreted form is glycosylated and this is required for efficient secretion of the protein from infected cells. Post-translationally, N-glycosylated. In terms of processing, specific enzymatic cleavages in vivo yield mature proteins. Cleavages in the lumen of endoplasmic reticulum are performed by host signal peptidase, wereas cleavages in the cytoplasmic side are performed by serine protease NS3. Signal cleavage at the 2K-4B site requires a prior NS3 protease-mediated cleavage at the 4A-2K site.

The protein resides in the virion membrane. It localises to the host endoplasmic reticulum membrane. Its subcellular location is the secreted. It catalyses the reaction Selective hydrolysis of -Xaa-Xaa-|-Yaa- bonds in which each of the Xaa can be either Arg or Lys and Yaa can be either Ser or Ala.. The catalysed reaction is a ribonucleoside 5'-triphosphate + H2O = a ribonucleoside 5'-diphosphate + phosphate + H(+). The enzyme catalyses ATP + H2O = ADP + phosphate + H(+). Its function is as follows. Binds to host cell surface receptor and mediates fusion between viral and cellular membranes. Envelope protein is synthesized in the endoplasmic reticulum in the form of heterodimer with protein prM. They play a role in virion budding in the ER, and the newly formed immature particle is covered with 60 spikes composed of heterodimer between precursor prM and envelope protein E. The virion is transported to the Golgi apparatus where the low pH causes dissociation of PrM-E heterodimers and formation of E homodimers. prM-E cleavage is inefficient, and many virions are only partially matured. These uncleaved prM would play a role in immune evasion. In terms of biological role, involved in immune evasion, pathogenesis and viral replication. Once cleaved off the polyprotein, is targeted to three destinations: the viral replication cycle, the plasma membrane and the extracellular compartment. Essential for viral replication. Required for formation of the replication complex and recruitment of other non-structural proteins to the ER-derived membrane structures. Excreted as a hexameric lipoparticle that plays a role against host immune response. Antagonizing the complement function. Binds to the host macrophages and dendritic cells. Inhibits signal transduction originating from Toll-like receptor 3 (TLR3). Disrupts the host endothelial glycocalyx layer of host pulmonary microvascular endothelial cells, inducing degradation of sialic acid and shedding of heparan sulfate proteoglycans. NS1 induces expression of sialidases, heparanase, and activates cathepsin L, which activates heparanase via enzymatic cleavage. These effects are probably linked to the endothelial hyperpermeability observed in severe dengue disease. Functionally, component of the viral RNA replication complex that functions in virion assembly and antagonizes the host immune response. Its function is as follows. Serine protease subunit NS2B: Required cofactor for the serine protease function of NS3. May have membrane-destabilizing activity and form viroporins. In terms of biological role, displays three enzymatic activities: serine protease, NTPase and RNA helicase. NS3 serine protease, in association with NS2B, performs its autocleavage and cleaves the polyprotein at dibasic sites in the cytoplasm: C-prM, NS2A-NS2B, NS2B-NS3, NS3-NS4A, NS4A-2K and NS4B-NS5. NS3 RNA helicase binds RNA and unwinds dsRNA in the 3' to 5' direction. The polypeptide is Genome polyprotein (Aedimorphus (Red guenon)).